The primary structure comprises 116 residues: Large ribosomal subunit protein bL19 (116 aa).

This sequence belongs to the bacterial ribosomal protein bL19 family.

Functionally, this protein is located at the 30S-50S ribosomal subunit interface and may play a role in the structure and function of the aminoacyl-tRNA binding site. In Clostridioides difficile (strain 630) (Peptoclostridium difficile), this protein is Large ribosomal subunit protein bL19.